The following is a 217-amino-acid chain: MOB kinase activator-like 2 (217 aa).

The segment at 15–38 (GKESIRGNYKPKKHPRGSSRHTMR) is disordered. Positions 23 to 38 (YKPKKHPRGSSRHTMR) are enriched in basic residues. C89, C94, H167, and H172 together coordinate Zn(2+).

It belongs to the MOB1/phocein family.

The chain is MOB kinase activator-like 2 (mob2) from Dictyostelium discoideum (Social amoeba).